Reading from the N-terminus, the 316-residue chain is MIAGLKGLKLPKDPRSSVTRTATDWAYAAGWMAVRALPEFAVRNAFDTGARYFARHGGPEQLRKNLARVLGVPPAAVPDPLMCASLESYGRYWREVFRLPTMNHRKLARQLDRVIGGLDHLDAALAAGLGAVLALPHSGNWDMAGMWLVQRHGTFTTVAERLKPESLYQRFIDYRESLGFEVLPLSGGERPPFEVLCERLRNNRVVCLMAERDLTRTGVEVDFFGEPTRMPVGPAKLAVETGAALLPTHCWFEGRGWGFQVYPALDCTSGDVAAITQALADRFAQNIAAHPADWHMLQPQWLADLSESRRAQLRSR.

Residue His-137 is the Proton acceptor of the active site. Residues His-137 and Arg-175 each contribute to the hexadecanoyl-CoA site. Glu-211 is an active-site residue. Glu-240 serves as a coordination point for hexadecanoyl-CoA.

It belongs to the LpxL/LpxM/LpxP family.

It localises to the cell inner membrane. It catalyses the reaction a 2,6-O-bis(alpha-D-mannopyranosyl)-1-phosphatidyl-1D-myo-inositol + an acyl-CoA = a 2-O-(alpha-D-mannosyl)-6-O-(6-O-acyl-alpha-D-mannosyl)-1-phosphatidyl-1D-myo-inositol + CoA. It carries out the reaction a 1,2-diacyl-sn-glycero-3-phospho-[alpha-D-mannopyranosyl-(1&lt;-&gt;6)-D-myo-inositol] + an acyl-CoA = a 1,2-diacyl-sn-glycero-3-phospho-[alpha-D-6-acyl-mannopyranosyl-(1&lt;-&gt;6)-D-myo-inositol] + CoA. It participates in phospholipid metabolism; phosphatidylinositol metabolism. Catalyzes the transfer of a palmitoyl moiety from palmitoyl-CoA to the 6-position of the mannose ring linked to the 2-position of myo-inositol in phosphatidyl-myo-inositol monomannoside (PIM1) or dimannoside (PIM2). In Mycobacterium tuberculosis (strain CDC 1551 / Oshkosh), this protein is Phosphatidylinositol mannoside acyltransferase.